Reading from the N-terminus, the 102-residue chain is Large ribosomal subunit protein bL21 (102 aa).

The protein belongs to the bacterial ribosomal protein bL21 family. In terms of assembly, part of the 50S ribosomal subunit. Contacts protein L20.

Its function is as follows. This protein binds to 23S rRNA in the presence of protein L20. The polypeptide is Large ribosomal subunit protein bL21 (Pelobacter propionicus (strain DSM 2379 / NBRC 103807 / OttBd1)).